A 437-amino-acid chain; its full sequence is Protein translocase subunit SecY (437 aa).

A run of 10 helical transmembrane segments spans residues 23-43 (IVFLIVAIIVFRIGSFIPIPG), 77-97 (IFALGIMPYISASIIIQLLTL), 125-145 (LILALVQSIGIAMTLPNIAGI), 154-174 (FYFYLIAIISLVTSTMFLMWL), 183-203 (IGNGISIIIFIGIIAGLPSAI), 217-237 (ILLFLFILLLIFSVIFLVVFM), 271-291 (MAGVIPAIFASSIVLFPATII), 315-335 (YLILYISAIVFFCFFYTGLVF), 367-387 (IMLRLTLVGSLYITFICLIPE), and 395-415 (VPFYFGGTSLLIVVVVIIDFI).

It belongs to the SecY/SEC61-alpha family. As to quaternary structure, component of the Sec protein translocase complex. Heterotrimer consisting of SecY, SecE and SecG subunits. The heterotrimers can form oligomers, although 1 heterotrimer is thought to be able to translocate proteins. Interacts with the ribosome. Interacts with SecDF, and other proteins may be involved. Interacts with SecA.

The protein localises to the cell membrane. In terms of biological role, the central subunit of the protein translocation channel SecYEG. Consists of two halves formed by TMs 1-5 and 6-10. These two domains form a lateral gate at the front which open onto the bilayer between TMs 2 and 7, and are clamped together by SecE at the back. The channel is closed by both a pore ring composed of hydrophobic SecY resides and a short helix (helix 2A) on the extracellular side of the membrane which forms a plug. The plug probably moves laterally to allow the channel to open. The ring and the pore may move independently. The polypeptide is Protein translocase subunit SecY (Buchnera aphidicola subsp. Acyrthosiphon pisum (strain APS) (Acyrthosiphon pisum symbiotic bacterium)).